The sequence spans 697 residues: Glycine--tRNA ligase beta subunit (697 aa).

Belongs to the class-II aminoacyl-tRNA synthetase family. In terms of assembly, tetramer of two alpha and two beta subunits.

The protein resides in the cytoplasm. It catalyses the reaction tRNA(Gly) + glycine + ATP = glycyl-tRNA(Gly) + AMP + diphosphate. This chain is Glycine--tRNA ligase beta subunit, found in Cereibacter sphaeroides (strain ATCC 17023 / DSM 158 / JCM 6121 / CCUG 31486 / LMG 2827 / NBRC 12203 / NCIMB 8253 / ATH 2.4.1.) (Rhodobacter sphaeroides).